We begin with the raw amino-acid sequence, 315 residues long: Small ribosomal subunit biogenesis GTPase RsgA (315 aa).

The region spanning Leu-79–Phe-243 is the CP-type G domain. Residues Asn-128–Asp-131 and Gly-182–Ser-190 contribute to the GTP site. Zn(2+) is bound by residues Cys-267, Cys-272, His-274, and Cys-280.

It belongs to the TRAFAC class YlqF/YawG GTPase family. RsgA subfamily. In terms of assembly, monomer. Associates with 30S ribosomal subunit, binds 16S rRNA. Zn(2+) serves as cofactor.

Its subcellular location is the cytoplasm. In terms of biological role, one of several proteins that assist in the late maturation steps of the functional core of the 30S ribosomal subunit. Helps release RbfA from mature subunits. May play a role in the assembly of ribosomal proteins into the subunit. Circularly permuted GTPase that catalyzes slow GTP hydrolysis, GTPase activity is stimulated by the 30S ribosomal subunit. This is Small ribosomal subunit biogenesis GTPase RsgA from Porphyromonas gingivalis (strain ATCC BAA-308 / W83).